A 348-amino-acid chain; its full sequence is Growth-regulating factor 5 (348 aa).

Residues 24–59 (VFTAAQWAELEQQALIYKYLVAGVPVPGDLLLPIRP) enclose the QLQ domain. Short sequence motifs (bipartite nuclear localization signal) lie at residues 94–112 (KKLD…KKWR) and 130–137 (RGRNRSRK). The WRC domain occupies 97–141 (DPEPWRCRRTDGKKWRCSKEAHPDSKYCERHMHRGRNRSRKPVES). Disordered stretches follow at residues 125–165 (ERHM…HDTD) and 306–348 (LRPF…PRCD). The span at 127-136 (HMHRGRNRSR) shows a compositional bias: basic residues. Residues 148 to 161 (PQSQPQLSNVTTAT) show a composition bias toward polar residues. Over residues 306-320 (LRPFFDEWPGRRDSW) the composition is skewed to basic and acidic residues. The segment covering 329 to 340 (NQTSFSTTQLSI) has biased composition (polar residues).

It belongs to the GRF family.

It localises to the nucleus. Transcription activator that plays a regulatory role in gibberellin-induced stem elongation. This chain is Growth-regulating factor 5 (GRF5), found in Oryza sativa subsp. japonica (Rice).